The chain runs to 115 residues: Variant surface glycoprotein ANTAT 1.8 (115 aa).

The N-linked (GlcNAc...) asparagine glycan is linked to Asn-42. Asp-92 carries the GPI-anchor amidated aspartate lipid modification. Residues 93–115 (SSILVNKQLALSVVSAAFAALLF) constitute a propeptide, removed in mature form.

The protein resides in the cell membrane. Its function is as follows. VSG forms a coat on the surface of the parasite. The trypanosome evades the immune response of the host by expressing a series of antigenically distinct VSGs from an estimated 1000 VSG genes. In Trypanosoma brucei brucei, this protein is Variant surface glycoprotein ANTAT 1.8.